A 472-amino-acid polypeptide reads, in one-letter code: Endoplasmic reticulum oxidoreductin-2 (472 aa).

The first 37 residues, 1 to 37 (MAETDVGSVKGKEKGSGKRWILLIGAIAAVLLAVVVA), serve as a signal peptide directing secretion. An N-linked (GlcNAc...) asparagine glycan is attached at Asn-44. Cystine bridges form between Cys-55–Cys-74, Cys-57–Cys-72, Cys-111–Cys-371, Cys-120–Cys-125, Cys-221–Cys-230, and Cys-374–Cys-377. Positions 200, 202, and 213 each coordinate FAD. FAD contacts are provided by Ser-241 and His-244. Residue Asn-267 is glycosylated (N-linked (GlcNAc...) asparagine). FAD is bound by residues Arg-274 and Arg-281. Residue Asn-364 is glycosylated (N-linked (GlcNAc...) asparagine).

The protein belongs to the EROs family. In terms of assembly, may function both as a monomer and a homodimer. Requires FAD as cofactor. In terms of processing, N-glycosylated.

The protein resides in the endoplasmic reticulum membrane. Essential oxidoreductase that oxidizes proteins in the endoplasmic reticulum to produce disulfide bonds. Acts by oxidizing directly PDI isomerase through a direct disulfide exchange. Does not act as a direct oxidant of folding substrate, but relies on PDI to transfer oxidizing equivalent. Does not oxidize all PDI related proteins, suggesting that it can discriminate between PDI and related proteins. Its reoxidation probably involves electron transfer to molecular oxygen via FAD. Acts independently of glutathione. May be responsible for a significant proportion of reactive oxygen species (ROS) in the cell, thereby being a source of oxidative stress. In Arabidopsis thaliana (Mouse-ear cress), this protein is Endoplasmic reticulum oxidoreductin-2 (AERO2).